Reading from the N-terminus, the 97-residue chain is MCFFFKLSKPKTTPHTNSNIVEIEYITSNGNSKQQIGELVNLELDGDDDVGFYYVLTLKLPNGRNKKFKEYHLNGKIKFNGKRFSDLKELKEYTSTH.

This is an uncharacterized protein from Haemophilus influenzae (Bacteriophage HP1).